A 267-amino-acid polypeptide reads, in one-letter code: MESLSLKFIEPYWFKFVDYYGEEFLLTYGTFIAHQVFYFGCFIPFLIADFIPFFRKYKIQQTKENDWKSQTYCAIKVILTQVLIQLPMMYIFDPAIKAIGLSARAPLPSIPYLLLTLVSSFIIEDFYFYWAHRALHHGIWYKYIHKVHHDYASPFGITAEYAHPLETIILGVGTVIGPFLFSRDLFTLWVWLGVRLYQTVECHSGYDFPWSFTNLIPFWGGAPFHDYHHEVFIGNYASTFTYLDKIFGTSGKSYYSRIEKKSINKSE.

The next 3 helical transmembrane spans lie at 31-51 (FIAHQVFYFGCFIPFLIADFI), 72-92 (YCAIKVILTQVLIQLPMMYIF), and 110-130 (IPYLLLTLVSSFIIEDFYFYW). Residues 119 to 249 (SSFIIEDFYF…FTYLDKIFGT (131 aa)) form the Fatty acid hydroxylase domain. A Histidine box-1 motif is present at residues 132–136 (HRALH). Positions 145–149 (HKVHH) match the Histidine box-2 motif. The Histidine box-3 signature appears at 224-230 (FHDYHHE).

It belongs to the sterol desaturase family. Fe cation serves as cofactor.

Its subcellular location is the endoplasmic reticulum membrane. The catalysed reaction is 4,4-dimethyl-5alpha-cholest-7-en-3beta-ol + 6 Fe(II)-[cytochrome b5] + 3 O2 + 5 H(+) = 4alpha-carboxy-4beta-methyl-5alpha-cholest-7-ene-3beta-ol + 6 Fe(III)-[cytochrome b5] + 4 H2O. The protein operates within steroid biosynthesis; zymosterol biosynthesis; zymosterol from lanosterol: step 3/6. The protein is Putative methylsterol monooxygenase DDB_G0270946 of Dictyostelium discoideum (Social amoeba).